Consider the following 1085-residue polypeptide: Protein IFH1 (1085 aa).

Disordered stretches follow at residues 1 to 251 (MAGK…QQAL), 283 to 302 (KNKE…VMLG), 457 to 493 (SKLK…TSNV), 507 to 622 (DDEN…DSSV), 676 to 700 (VDDE…IGSK), and 747 to 774 (QLRE…GDEL). 2 stretches are compositionally biased toward polar residues: residues 9-18 (KSTINHSTHS) and 39-48 (RQSPPTLSTT). Over residues 54–66 (SLIYSSESSLSDV) the composition is skewed to low complexity. The segment covering 76 to 85 (NPHKIKRKAK) has biased composition (basic residues). Residues 120–165 (DGEESENEEEESEEEEEDDDEDDDDDDDDGSDSDSDSETSSDDENI) are compositionally biased toward acidic residues. The span at 184-197 (AMNTNSNTLYSSRE) shows a compositional bias: polar residues. Ser208 is modified (phosphoserine). Residues 209–239 (PKKENEEEQKEEKEKEKEEQQKQQESNKKEV) are compositionally biased toward basic and acidic residues. The segment covering 241 to 251 (GSGTTTTQQAL) has biased composition (polar residues). Basic and acidic residues predominate over residues 283-297 (KNKENNGNEEDKLDS). The segment covering 474–483 (QRRKLYKKTQ) has biased composition (basic residues). Polar residues predominate over residues 484–493 (KPSTRTTSNV). Basic residues predominate over residues 513 to 524 (HKSKKGRHKSGK). Polar residues predominate over residues 546 to 557 (STHSTVLNSGKY). The segment covering 584–599 (ETSHDADTDEELRALD) has biased composition (basic and acidic residues). 2 stretches are compositionally biased toward acidic residues: residues 607–620 (TELD…DDDS) and 676–686 (VDDESTDEDDN). Basic and acidic residues predominate over residues 747–764 (QLREQHQRAQTPDVKREG). Residue Ser1041 is modified to Phosphoserine.

This sequence belongs to the IFH1 family.

It localises to the nucleus. In terms of biological role, transcriptional coactivator that together with FHL1 regulates the expression of rRNA and ribosomal protein genes. Its activity is negatively regulated by environmental stress. The chain is Protein IFH1 (IFH1) from Saccharomyces cerevisiae (strain ATCC 204508 / S288c) (Baker's yeast).